The following is a 106-amino-acid chain: Thioredoxin (106 aa).

In terms of domain architecture, Thioredoxin spans 1–106 (GATVKVTNAT…RLAAFLDASL (106 aa)). Cys-31 and Cys-34 are joined by a disulfide.

It belongs to the thioredoxin family.

Functionally, participates in various redox reactions through the reversible oxidation of its active center dithiol to a disulfide and catalyzes dithiol-disulfide exchange reactions. This chain is Thioredoxin (trxA), found in Kitasatospora aureofaciens (Streptomyces aureofaciens).